The primary structure comprises 254 residues: Small ribosomal subunit protein uS3 (254 aa).

Residues 38–106 (IRKYVLARIP…DVQINIFEIK (69 aa)) form the KH type-2 domain. The segment covering 215–238 (NVGNAASGASSSSNNDNASPNQGG) has biased composition (low complexity). Residues 215–254 (NVGNAASGASSSSNNDNASPNQGGPRRKRGGEGNRKKSNK) form a disordered region. Residues 244–254 (GGEGNRKKSNK) show a composition bias toward basic and acidic residues.

This sequence belongs to the universal ribosomal protein uS3 family. In terms of assembly, part of the 30S ribosomal subunit. Forms a tight complex with proteins S10 and S14.

Its function is as follows. Binds the lower part of the 30S subunit head. Binds mRNA in the 70S ribosome, positioning it for translation. The sequence is that of Small ribosomal subunit protein uS3 from Cytophaga hutchinsonii (strain ATCC 33406 / DSM 1761 / CIP 103989 / NBRC 15051 / NCIMB 9469 / D465).